We begin with the raw amino-acid sequence, 208 residues long: MKFLLIACLAVPAILAQQTSAPGGNLCTYPPQGDESNQKAVPIQDFRTSGLDFVRPNWCITHCADRKSVKAAVRFQFANQSTAVPTYKVRRTFTRYSGMKVHAELISGNPTKRDDDPFNFCMDDAVSAQIDTIVNTYNDIETMSEALNFYINKPGWAYIIYDMGVPPSIIETDNVKHDMNYCEKSSNKQMPDGTYMTYQVFAGLIKAN.

Residues 1-16 (MKFLLIACLAVPAILA) form the signal peptide. N-linked (GlcNAc...) asparagine glycosylation occurs at asparagine 79.

This is an uncharacterized protein from Caenorhabditis elegans.